We begin with the raw amino-acid sequence, 264 residues long: Phosphate import ATP-binding protein PstB (264 aa).

The 240-residue stretch at 11–250 folds into the ABC transporter domain; that stretch reads LKAEALSVYY…DTTEKIFDSP (240 aa). 43-50 lines the ATP pocket; sequence GPSGCGKS.

This sequence belongs to the ABC transporter superfamily. Phosphate importer (TC 3.A.1.7) family. In terms of assembly, the complex is composed of two ATP-binding proteins (PstB), two transmembrane proteins (PstC and PstA) and a solute-binding protein (PstS).

The protein resides in the cell inner membrane. The catalysed reaction is phosphate(out) + ATP + H2O = ADP + 2 phosphate(in) + H(+). Its function is as follows. Part of the ABC transporter complex PstSACB involved in phosphate import. Responsible for energy coupling to the transport system. In Synechococcus sp. (strain ATCC 27144 / PCC 6301 / SAUG 1402/1) (Anacystis nidulans), this protein is Phosphate import ATP-binding protein PstB.